Here is a 297-residue protein sequence, read N- to C-terminus: Protoheme IX farnesyltransferase 1 (297 aa).

9 helical membrane-spanning segments follow: residues 23 to 43, 45 to 65, 93 to 113, 117 to 137, 145 to 165, 171 to 191, 216 to 236, 241 to 261, and 277 to 297; these read VVVL…RAGV, WSVL…AAVV, LPAL…LLVF, LTAW…TGFL, IVIG…AVSG, PLLL…ALAI, LHIL…YAIH, LYLV…WVLY, and IGYL…LLNL.

It belongs to the UbiA prenyltransferase family. Protoheme IX farnesyltransferase subfamily.

It is found in the cell inner membrane. The enzyme catalyses heme b + (2E,6E)-farnesyl diphosphate + H2O = Fe(II)-heme o + diphosphate. Its pathway is porphyrin-containing compound metabolism; heme O biosynthesis; heme O from protoheme: step 1/1. Its function is as follows. Converts heme B (protoheme IX) to heme O by substitution of the vinyl group on carbon 2 of heme B porphyrin ring with a hydroxyethyl farnesyl side group. The sequence is that of Protoheme IX farnesyltransferase 1 from Pseudomonas putida (strain ATCC 47054 / DSM 6125 / CFBP 8728 / NCIMB 11950 / KT2440).